Consider the following 72-residue polypeptide: Beta-defensin 104A (72 aa).

Positions 1–22 (MRRLVLLLAISLLLYQDLPVRS) are cleaved as a signal peptide. Cystine bridges form between cysteine 30-cysteine 57, cysteine 37-cysteine 51, and cysteine 41-cysteine 58.

The protein belongs to the beta-defensin family.

The protein resides in the secreted. Functionally, has antimicrobial activity. This Gorilla gorilla gorilla (Western lowland gorilla) protein is Beta-defensin 104A (DEFB104A).